Here is a 553-residue protein sequence, read N- to C-terminus: Formate--tetrahydrofolate ligase (553 aa).

An ATP-binding site is contributed by 63-70; it reads TPAGEGKS.

This sequence belongs to the formate--tetrahydrofolate ligase family.

The catalysed reaction is (6S)-5,6,7,8-tetrahydrofolate + formate + ATP = (6R)-10-formyltetrahydrofolate + ADP + phosphate. Its pathway is one-carbon metabolism; tetrahydrofolate interconversion. This Limosilactobacillus fermentum (strain NBRC 3956 / LMG 18251) (Lactobacillus fermentum) protein is Formate--tetrahydrofolate ligase.